Reading from the N-terminus, the 238-residue chain is ATP synthase subunit a, chloroplastic (238 aa).

5 helical membrane-spanning segments follow: residues 27–47 (GQVL…SFLG), 86–106 (VPFL…GALL), 125–145 (INTT…AGIS), 190–210 (LVVG…IMLL), and 211–231 (GVFT…AYIN).

Belongs to the ATPase A chain family. As to quaternary structure, F-type ATPases have 2 components, F(1) - the catalytic core - and F(0) - the membrane proton channel. F(1) has five subunits: alpha(3), beta(3), gamma(1), delta(1), epsilon(1). F(0) has four main subunits: a(1), b(1), b'(1) and c(10-14). The alpha and beta chains form an alternating ring which encloses part of the gamma chain. F(1) is attached to F(0) by a central stalk formed by the gamma and epsilon chains, while a peripheral stalk is formed by the delta, b and b' chains.

The protein localises to the plastid. It is found in the chloroplast thylakoid membrane. In terms of biological role, f(1)F(0) ATP synthase produces ATP from ADP in the presence of a proton or sodium gradient. F-type ATPases consist of two structural domains, F(1) containing the extramembraneous catalytic core and F(0) containing the membrane proton channel, linked together by a central stalk and a peripheral stalk. During catalysis, ATP synthesis in the catalytic domain of F(1) is coupled via a rotary mechanism of the central stalk subunits to proton translocation. This Chlamydomonas reinhardtii (Chlamydomonas smithii) protein is ATP synthase subunit a, chloroplastic.